Consider the following 329-residue polypeptide: uncharacterized protein (329 aa).

An N-terminal signal peptide occupies residues 1-22 (MPLCNNFSGNLVVAVALFFAGA).

This is an uncharacterized protein from Arabidopsis thaliana (Mouse-ear cress).